The primary structure comprises 241 residues: DNA-binding dual master transcriptional regulator RpaA (241 aa).

The Response regulatory domain occupies 3 to 119; it reads RILIIDDDPA…EMLARVRALL (117 aa). The residue at position 52 (aspartate 52) is a 4-aspartylphosphate. Residues 132–231 constitute a DNA-binding region (ompR/PhoB-type); sequence SEILNQGPLT…VYGAGYCLEL (100 aa).

Interacts with reduced ferredoxin (petF). Interacts with CikA, RpaB, SasA, Sll0038 (pixG) and a number of other proteins. Post-translationally, phosphorylated by SasA; phosphorylation is maximal when KaiC phosphorylation is active during the circadian cycle. Dephosphorylated by CikA. CikA and SasA cooperation generates RpaA activity oscillation that is distinct from that generated by CikA or SasA alone and offset from the rhythm of KaiC phosphorylation.

It localises to the cytoplasm. Functionally, response regulator of 2 two-component regulatory systems SasA/RpaA and CikA/RpaA involved in genome-wide circadian gene expression. The histidine kinases have opposing effects modulated by the clock oscillator proteins; SasA phosphorylates RpaA (stimulated by fully phosphorylated KaiC1) while CikA dephosphorylates phospho-RpaA (stimulated by the phospho-Ser-432-KaiC1-KaiB complex). Its function is as follows. The RpaA regulon is about 300 genes, and includes itself, cikA, sigE, sigG, genes involved in photosynthesis, carbon metabolism in the light and dark, phototaxis, CRISPR arrays 2 and 3 as well as nearly 90 ncRNAs. Genes are up- or down-regulated in its absence. Involved in regulation of primary sugar and amino acid metabolism and in adaptation to light changes. Regulates the accumulation of the monomeric photosystem I and the D1 protein under high light conditions. Overexpression causes cells to grow more slowly, increases levels of transcripts for clock oscillator genes in the light and the dark, increases levels of SigE protein, increases accumulation of sugar catabolic enzymes in the dark with concomitant decreases in most sugar metabolites. Plays a role in cell division; overexpression from the psbAII promoter increases expression of some cell-division-related genes, alters cell volume and changes the outer cell membrane and cell wall appearance. This is DNA-binding dual master transcriptional regulator RpaA from Synechocystis sp. (strain ATCC 27184 / PCC 6803 / Kazusa).